We begin with the raw amino-acid sequence, 175 residues long: Crossover junction endodeoxyribonuclease RuvC (175 aa).

Residues D16, E76, and D148 contribute to the active site. 3 residues coordinate Mg(2+): D16, E76, and D148.

It belongs to the RuvC family. In terms of assembly, homodimer which binds Holliday junction (HJ) DNA. The HJ becomes 2-fold symmetrical on binding to RuvC with unstacked arms; it has a different conformation from HJ DNA in complex with RuvA. In the full resolvosome a probable DNA-RuvA(4)-RuvB(12)-RuvC(2) complex forms which resolves the HJ. Mg(2+) is required as a cofactor.

The protein resides in the cytoplasm. It catalyses the reaction Endonucleolytic cleavage at a junction such as a reciprocal single-stranded crossover between two homologous DNA duplexes (Holliday junction).. Functionally, the RuvA-RuvB-RuvC complex processes Holliday junction (HJ) DNA during genetic recombination and DNA repair. Endonuclease that resolves HJ intermediates. Cleaves cruciform DNA by making single-stranded nicks across the HJ at symmetrical positions within the homologous arms, yielding a 5'-phosphate and a 3'-hydroxyl group; requires a central core of homology in the junction. The consensus cleavage sequence is 5'-(A/T)TT(C/G)-3'. Cleavage occurs on the 3'-side of the TT dinucleotide at the point of strand exchange. HJ branch migration catalyzed by RuvA-RuvB allows RuvC to scan DNA until it finds its consensus sequence, where it cleaves and resolves the cruciform DNA. The protein is Crossover junction endodeoxyribonuclease RuvC of Bradyrhizobium sp. (strain BTAi1 / ATCC BAA-1182).